Reading from the N-terminus, the 61-residue chain is Large ribosomal subunit protein bL28 (61 aa).

The disordered stretch occupies residues 1–21 (MAKDYVTGKKTTFGNKRSHAM).

This sequence belongs to the bacterial ribosomal protein bL28 family.

This chain is Large ribosomal subunit protein bL28, found in Lactobacillus helveticus (strain DPC 4571).